A 231-amino-acid chain; its full sequence is 6-phosphogluconolactonase (231 aa).

Belongs to the glucosamine/galactosamine-6-phosphate isomerase family. 6-phosphogluconolactonase subfamily.

The enzyme catalyses 6-phospho-D-glucono-1,5-lactone + H2O = 6-phospho-D-gluconate + H(+). The protein operates within carbohydrate degradation; pentose phosphate pathway; D-ribulose 5-phosphate from D-glucose 6-phosphate (oxidative stage): step 2/3. Functionally, hydrolysis of 6-phosphogluconolactone to 6-phosphogluconate. This chain is 6-phosphogluconolactonase (pgl), found in Neisseria meningitidis serogroup A / serotype 4A (strain DSM 15465 / Z2491).